The following is a 187-amino-acid chain: Orotate phosphoribosyltransferase (187 aa).

5-phospho-alpha-D-ribose 1-diphosphate contacts are provided by residues Arg98, Lys99, Lys102, His104, and 128–136; that span reads EDVTTTGGS. Positions 132 and 160 each coordinate orotate.

The protein belongs to the purine/pyrimidine phosphoribosyltransferase family. PyrE subfamily. Homodimer. It depends on Mg(2+) as a cofactor.

The catalysed reaction is orotidine 5'-phosphate + diphosphate = orotate + 5-phospho-alpha-D-ribose 1-diphosphate. Its pathway is pyrimidine metabolism; UMP biosynthesis via de novo pathway; UMP from orotate: step 1/2. In terms of biological role, catalyzes the transfer of a ribosyl phosphate group from 5-phosphoribose 1-diphosphate to orotate, leading to the formation of orotidine monophosphate (OMP). The sequence is that of Orotate phosphoribosyltransferase from Bradyrhizobium diazoefficiens (strain JCM 10833 / BCRC 13528 / IAM 13628 / NBRC 14792 / USDA 110).